Here is a 453-residue protein sequence, read N- to C-terminus: Homogentisate 1,2-dioxygenase (453 aa).

The active-site Proton acceptor is His-306. Fe cation-binding residues include His-349 and Glu-355. The homogentisate site is built by Tyr-364 and His-385. A Fe cation-binding site is contributed by His-385.

Belongs to the homogentisate dioxygenase family. As to quaternary structure, hexamer; dimer of trimers. It depends on Fe cation as a cofactor.

The enzyme catalyses homogentisate + O2 = 4-maleylacetoacetate + H(+). Its pathway is amino-acid degradation; L-phenylalanine degradation; acetoacetate and fumarate from L-phenylalanine: step 4/6. Involved in the catabolism of homogentisate (2,5-dihydroxyphenylacetate or 2,5-OH-PhAc), a central intermediate in the degradation of phenylalanine and tyrosine. Catalyzes the oxidative ring cleavage of the aromatic ring of homogentisate to yield maleylacetoacetate. The chain is Homogentisate 1,2-dioxygenase from Rhizobium etli (strain ATCC 51251 / DSM 11541 / JCM 21823 / NBRC 15573 / CFN 42).